Here is a 152-residue protein sequence, read N- to C-terminus: Nucleoside diphosphate kinase A (152 aa).

Residues lysine 12, phenylalanine 60, arginine 88, and threonine 94 each contribute to the ATP site. Residue lysine 100 forms a Glycyl lysine isopeptide (Lys-Gly) (interchain with G-Cter in ubiquitin) linkage. The ATP site is built by arginine 105 and asparagine 115. The Pros-phosphohistidine intermediate role is filled by histidine 118. Residues serine 120 and serine 122 each carry the phosphoserine modification. The residue at position 124 (lysine 124) is an N6-acetyllysine. Serine 125 bears the Phosphoserine mark.

This sequence belongs to the NDK family. In terms of assembly, hexamer of two different chains: An and B (A6, A5B, A4B2, A3B3, A2B4, AB5, B6). Interacts with PRUNE1. Component of the SET complex, composed of at least ANP32A, APEX1, HMGB2, NME1, SET and TREX1. Within this complex, interacts directly with SET. Also interacts with TREX1, but only following translocation to the nucleus. Mg(2+) is required as a cofactor.

Its subcellular location is the cytoplasm. The protein localises to the nucleus. It carries out the reaction a 2'-deoxyribonucleoside 5'-diphosphate + ATP = a 2'-deoxyribonucleoside 5'-triphosphate + ADP. The enzyme catalyses a ribonucleoside 5'-diphosphate + ATP = a ribonucleoside 5'-triphosphate + ADP. Autophosphorylation at His-118 increases serine/threonine protein kinase activity of the enzyme. Interaction with the SET complex inhibits exonuclease activity. In terms of biological role, major role in the synthesis of nucleoside triphosphates other than ATP. The ATP gamma phosphate is transferred to the NDP beta phosphate via a ping-pong mechanism, using a phosphorylated active-site intermediate. Possesses nucleoside-diphosphate kinase, serine/threonine-specific protein kinase, geranyl and farnesyl pyrophosphate kinase, histidine protein kinase and 3'-5' exonuclease activities. Involved in cell proliferation, differentiation and development, signal transduction, G protein-coupled receptor endocytosis, and gene expression. Required for neural development including neural patterning and cell fate determination. During GZMA-mediated cell death, works in concert with TREX1. NME1 nicks one strand of DNA and TREX1 removes bases from the free 3' end to enhance DNA damage and prevent DNA end reannealing and rapid repair. This is Nucleoside diphosphate kinase A (Nme1) from Mus musculus (Mouse).